Reading from the N-terminus, the 545-residue chain is Calcium-dependent protein kinase 6 (545 aa).

Glycine 2 carries the N-myristoyl glycine lipid modification. Positions 34 to 43 (CSSTSTATSS) are enriched in low complexity. The tract at residues 34 to 58 (CSSTSTATSSGGRMPIRSHQQRLSS) is disordered. The region spanning 74–332 (YTVGRKLGQG…AHQVLCHPWV (259 aa)) is the Protein kinase domain. Residues 80-88 (LGQGQFGTT) and lysine 103 contribute to the ATP site. The active-site Proton acceptor is the aspartate 198. Residues 338-368 (APDRPLAPAVLSRLKQFSAMNRLKKMALRVI) form an autoinhibitory domain region. 4 EF-hand domains span residues 375-410 (EELA…YGSN), 411-446 (LREA…LNKL), 447-482 (EREE…HNMA), and 486-516 (IDDI…GAID). Ca(2+)-binding residues include aspartate 388, aspartate 390, serine 392, glutamate 399, aspartate 424, aspartate 426, serine 428, threonine 430, glutamate 435, aspartate 460, aspartate 462, serine 464, tyrosine 466, glutamate 471, aspartate 494, aspartate 496, aspartate 498, arginine 500, and glutamate 505. The segment at 526 to 545 (GRPTTATSDDPSPTISSSSR) is disordered. Low complexity predominate over residues 528–545 (PTTATSDDPSPTISSSSR).

The protein belongs to the protein kinase superfamily. Ser/Thr protein kinase family. CDPK subfamily.

Its subcellular location is the membrane. It catalyses the reaction L-seryl-[protein] + ATP = O-phospho-L-seryl-[protein] + ADP + H(+). The enzyme catalyses L-threonyl-[protein] + ATP = O-phospho-L-threonyl-[protein] + ADP + H(+). Activated by calcium. Autophosphorylation may play an important role in the regulation of the kinase activity. Its function is as follows. May play a role in signal transduction pathways that involve calcium as a second messenger. The sequence is that of Calcium-dependent protein kinase 6 from Oryza sativa subsp. japonica (Rice).